A 467-amino-acid polypeptide reads, in one-letter code: Thiohydroximate-O-sulfate sulfur/sulfate-lyase (nitrile-forming) NSP3 (467 aa).

Residues 2-143 (AQKLVAQGGE…LHSLGAYVSL (142 aa)) form the Jacalin-type lectin domain. Kelch repeat units lie at residues 177–225 (KIYS…VRMV), 230–276 (TLYT…SMAA), 280–329 (NVYV…VVQG), 331–375 (VWIV…ASAA), and 379–434 (HIVI…ASTT). Arginine 237 (proton donor) is an active-site residue. Arginine 237, serine 270, arginine 292, glycine 321, and valine 370 together coordinate a (Z)-N-(sulfonatooxy)alkanimidothioate. Arginine 292 serves as the catalytic Proton donor. 3 residues coordinate Fe(2+): glutamate 386, aspartate 390, and histidine 394. Residue tryptophan 429 participates in a (Z)-N-(sulfonatooxy)alkanimidothioate binding.

It belongs to the jacalin lectin family. The cofactor is Fe(2+). As to expression, mainly expressed in roots, and, at low levels, in seedlings and leaves. Observed in seeds.

The enzyme catalyses a (Z)-N-(sulfonatooxy)alkanimidothioate = a nitrile + sulfur + sulfate. It catalyses the reaction (Z)-phenyl-N-(sulfonatooxy)methanimidothioate = phenylacetonitrile + sulfur + sulfate. It carries out the reaction (Z)-N-(sulfonatooxy)prop-2-enimidothioate = but-3-enenitrile + sulfur + sulfate. Specifier protein responsible for constitutive and herbivore-induced simple nitrile formation, especially in roots. Promotes simple nitriles, but not epithionitrile or thiocyanate formation. Converts allylglucosinolate and benzylglucosinolate (glucotropaeolin) to their corresponding simple nitriles in the presence of myrosinase. This is Thiohydroximate-O-sulfate sulfur/sulfate-lyase (nitrile-forming) NSP3 from Arabidopsis thaliana (Mouse-ear cress).